The sequence spans 624 residues: Chaperone protein HtpG (624 aa).

The interval 1–336 (MKTQKKEVYN…SSDLPLNISR (336 aa)) is a; substrate-binding. The segment at 337-552 (EILQDNSITE…STEMTTQMAK (216 aa)) is b. The c stretch occupies residues 553-624 (LFSAAGQSVP…ISRMNKLLIK (72 aa)).

It belongs to the heat shock protein 90 family. As to quaternary structure, homodimer.

The protein localises to the cytoplasm. In terms of biological role, molecular chaperone. Has ATPase activity. This Buchnera aphidicola subsp. Acyrthosiphon pisum (strain APS) (Acyrthosiphon pisum symbiotic bacterium) protein is Chaperone protein HtpG.